A 160-amino-acid polypeptide reads, in one-letter code: SsrA-binding protein (160 aa).

The segment at 136-160 (KRDTMRERDSNRELQRAVRNKGKED) is disordered.

It belongs to the SmpB family.

Its subcellular location is the cytoplasm. Required for rescue of stalled ribosomes mediated by trans-translation. Binds to transfer-messenger RNA (tmRNA), required for stable association of tmRNA with ribosomes. tmRNA and SmpB together mimic tRNA shape, replacing the anticodon stem-loop with SmpB. tmRNA is encoded by the ssrA gene; the 2 termini fold to resemble tRNA(Ala) and it encodes a 'tag peptide', a short internal open reading frame. During trans-translation Ala-aminoacylated tmRNA acts like a tRNA, entering the A-site of stalled ribosomes, displacing the stalled mRNA. The ribosome then switches to translate the ORF on the tmRNA; the nascent peptide is terminated with the 'tag peptide' encoded by the tmRNA and targeted for degradation. The ribosome is freed to recommence translation, which seems to be the essential function of trans-translation. The chain is SsrA-binding protein from Pseudomonas putida (strain GB-1).